Reading from the N-terminus, the 565-residue chain is NAD-dependent malic enzyme (565 aa).

Residue Tyr104 is the Proton donor of the active site. Arg157 lines the NAD(+) pocket. The Proton acceptor role is filled by Lys175. The a divalent metal cation site is built by Glu246, Asp247, and Asp270. The NAD(+) site is built by Asp270 and Asn418.

It belongs to the malic enzymes family. In terms of assembly, homotetramer. It depends on Mg(2+) as a cofactor. The cofactor is Mn(2+).

The catalysed reaction is (S)-malate + NAD(+) = pyruvate + CO2 + NADH. It catalyses the reaction oxaloacetate + H(+) = pyruvate + CO2. The sequence is that of NAD-dependent malic enzyme from Salmonella arizonae (strain ATCC BAA-731 / CDC346-86 / RSK2980).